A 2242-amino-acid chain; its full sequence is Transcription factor sma-9 (2242 aa).

Residues 120-383 (HQLAQQQAQQ…QQAQQAQLAQ (264 aa)) are a coiled coil. Over residues 317–330 (AAQQAQAQNNASQQ) the composition is skewed to low complexity. Disordered stretches follow at residues 317 to 344 (AAQQ…SSTP), 494 to 553 (TPVA…SMSD), 583 to 617 (GAQS…SRSQ), 712 to 754 (LAAH…SSFP), and 1323 to 1349 (EDST…SPPL). Residues 331-344 (RPSVASTPALSSTP) are compositionally biased toward polar residues. Low complexity-rich tracts occupy residues 494–523 (TPVA…ATSS) and 539–550 (SSSKAASSGNES). A compositionally biased stretch (polar residues) spans 583–601 (GAQSSVDHDSNSGGSTRTS). Polar residues predominate over residues 1324–1338 (DSTSAEPSTSGQSLL). 5 C2H2-type zinc fingers span residues 1447 to 1469 (YICD…IKSH), 1475 to 1499 (FNCT…SKTH), 1700 to 1722 (LKCD…QHTH), 1734 to 1760 (YQCS…HGVH), and 1790 to 1814 (FMCV…SKTH). The span at 2029-2039 (SITSPIVSSST) shows a compositional bias: low complexity. Disordered regions lie at residues 2029 to 2059 (SITS…PTHT) and 2085 to 2107 (STDK…PRPI). Over residues 2085–2099 (STDKAHASESLSDRL) the composition is skewed to basic and acidic residues. 2 consecutive C2H2-type zinc fingers follow at residues 2111–2134 (TKCQ…HVDH) and 2143–2167 (YKCP…VTAH). The disordered stretch occupies residues 2219 to 2242 (HELYAQTQQGAGSSTSNQSPKAAN). Over residues 2223 to 2242 (AQTQQGAGSSTSNQSPKAAN) the composition is skewed to polar residues.

Expressed in the ventral nerve cord (VNC), pharynx, intestine and seam cells (at protein level).

Its subcellular location is the nucleus. Its function is as follows. Transcription factor, probably acting as a transcriptional activator and repressor, involved in the TGF-beta-like dbl-1 signaling pathway. Plays a role in regulation of body size, and patterning of male-specific genital sensilla (simple sense organs), known as rays, and mating-associated structures, spicules. Required for the dorsoventral patterning of the postembryonic mesodermal lineage (M lineage), acting by antagonizing the TGF-beta-like dbl-1 signaling pathway, in part by repressing expression of transcription factor unc-130. Involved in egg-laying, perhaps via modulation of cholinergic neurotransmission. Involved in production of reactive oxygen species (ROS), acting downstream of the dbl-1 signaling pathway. Plays a role in the mitochondrial unfolded protein response (mtUPR). May play a role in modulating lifespan and in responses to proteotoxic stress. Transcription factor, probably acting as a transcriptional activator. Required for patterning of male-specific genital sensilla (simple sense organs), known as rays. Dispensable for regulation of body size. In Caenorhabditis elegans, this protein is Transcription factor sma-9.